A 354-amino-acid chain; its full sequence is Deubiquitination-protection protein dph1 (354 aa).

Positions 1–78 (MTNISLTIKA…SIHLVKTLGQ (78 aa)) constitute a Ubiquitin-like domain. The UBA domain occupies 309 to 353 (PPEERYAEQLSQLNEMGFVDFERNVQALRRSGGNVQGAIESLLSD).

Its function is as follows. Protects ubiquitin chains against dissambly by deubiquitinating enzymes thereby promoting protein degradation. The protein is Deubiquitination-protection protein dph1 (dph1) of Schizosaccharomyces pombe (strain 972 / ATCC 24843) (Fission yeast).